The sequence spans 186 residues: NADH dehydrogenase [ubiquinone] 1 beta subcomplex subunit 8, mitochondrial (186 aa).

A mitochondrion-targeting transit peptide spans 1 to 28 (MAAARAGVLGVRWLQKAARNVVPLGART). The chain crosses the membrane as a helical span at residues 133–153 (LFGFVAFMLFMFWVGETYPAY).

This sequence belongs to the complex I NDUFB8 subunit family. In terms of assembly, complex I is composed of 45 different subunits.

It localises to the mitochondrion inner membrane. In terms of biological role, accessory subunit of the mitochondrial membrane respiratory chain NADH dehydrogenase (Complex I), that is believed not to be involved in catalysis. Complex I functions in the transfer of electrons from NADH to the respiratory chain. The immediate electron acceptor for the enzyme is believed to be ubiquinone. The polypeptide is NADH dehydrogenase [ubiquinone] 1 beta subcomplex subunit 8, mitochondrial (NDUFB8) (Bos taurus (Bovine)).